The following is a 396-amino-acid chain: LIM/homeobox protein Lhx9 (396 aa).

LIM zinc-binding domains follow at residues alanine 69 to valine 130 and glutamine 131 to glycine 193. Disordered regions lie at residues glutamate 248 to threonine 272, arginine 328 to threonine 365, and serine 377 to phenylalanine 396. The homeobox DNA-binding region spans threonine 267 to valine 326. Residues leucine 352–threonine 365 are compositionally biased toward low complexity. A compositionally biased stretch (polar residues) spans serine 384–phenylalanine 396.

It localises to the nucleus. In terms of biological role, may be involved in gonadal development. The polypeptide is LIM/homeobox protein Lhx9 (lhx9) (Danio rerio (Zebrafish)).